Reading from the N-terminus, the 158-residue chain is Transcriptional repressor NrdR (158 aa).

A disordered region spans residues 1-20 (MRCPYCQSEDTQVKDSRPAE). Residues 3-34 (CPYCQSEDTQVKDSRPAEDGAVIRRRRVCSVC) fold into a zinc finger. A compositionally biased stretch (basic and acidic residues) spans 11 to 20 (TQVKDSRPAE). One can recognise an ATP-cone domain in the interval 49–139 (LMVVKKSGRR…VYRNFSKAVD (91 aa)).

Belongs to the NrdR family. Zn(2+) serves as cofactor.

Its function is as follows. Negatively regulates transcription of bacterial ribonucleotide reductase nrd genes and operons by binding to NrdR-boxes. In Brucella anthropi (strain ATCC 49188 / DSM 6882 / CCUG 24695 / JCM 21032 / LMG 3331 / NBRC 15819 / NCTC 12168 / Alc 37) (Ochrobactrum anthropi), this protein is Transcriptional repressor NrdR.